The chain runs to 38 residues: Large ribosomal subunit protein bL36 (38 aa).

The protein belongs to the bacterial ribosomal protein bL36 family.

This is Large ribosomal subunit protein bL36 from Buchnera aphidicola subsp. Baizongia pistaciae (strain Bp).